The sequence spans 476 residues: Sensor protein CzcS (476 aa).

The signal sequence occupies residues 1–35; it reads MRPGTSITPLSLTRRLGLFFALVLSIALASMGAFA. Topologically, residues 37–158 are periplasmic; that stretch reads YSLAAQLEAR…DRKQVTARFR (122 aa). A helical membrane pass occupies residues 159–179; that stretch reads TTLVLGTTVGVILTALVGAAI. Over 180-476 the chain is Cytoplasmic; that stretch reads TRRELEPAHV…RPSQDRPVVG (297 aa). The HAMP domain maps to 181–234; the sequence is RRELEPAHVLIKQINRISVERLSYRVDMPPKPTEVRDIASAFNAMLQRLEDGYQ. Positions 242–455 constitute a Histidine kinase domain; sequence DLAHDLRTPL…TRFTLRFPLN (214 aa). At H245 the chain carries Phosphohistidine; by autocatalysis.

The protein resides in the cell inner membrane. It catalyses the reaction ATP + protein L-histidine = ADP + protein N-phospho-L-histidine.. In terms of biological role, member of the two-component regulatory system CzcS/CzcR involved in the control of cobalt, zinc and cadmium homeostasis. Probably activates CzcR by phosphorylation. The chain is Sensor protein CzcS (czcS) from Cupriavidus metallidurans (strain ATCC 43123 / DSM 2839 / NBRC 102507 / CH34) (Ralstonia metallidurans).